The following is a 396-amino-acid chain: Phosphoglycerate kinase (396 aa).

Residues 21 to 23 (DLN), Arg36, 59 to 62 (HFGR), Arg118, and Arg151 contribute to the substrate site. Residues Lys201, Glu323, and 353–356 (GGDT) each bind ATP.

It belongs to the phosphoglycerate kinase family. In terms of assembly, monomer.

It localises to the cytoplasm. The enzyme catalyses (2R)-3-phosphoglycerate + ATP = (2R)-3-phospho-glyceroyl phosphate + ADP. It participates in carbohydrate degradation; glycolysis; pyruvate from D-glyceraldehyde 3-phosphate: step 2/5. The polypeptide is Phosphoglycerate kinase (Rhodospirillum centenum (strain ATCC 51521 / SW)).